Reading from the N-terminus, the 438-residue chain is ATP-dependent RNA helicase SUB2 (438 aa).

Residues 1-19 (MSHEGEEDLLEYSDNEQEI) show a composition bias toward acidic residues. The tract at residues 1 to 44 (MSHEGEEDLLEYSDNEQEIQVDNTKATEVAGNGEEAADGKDGDK) is disordered. The Q motif motif lies at 54 to 82 (TGFKDFLLKPELSRAIIDCGFEHPSEVQQ). In terms of domain architecture, Helicase ATP-binding spans 85 to 260 (IPQSIHGTDV…RRFLQNPLEI (176 aa)). 98 to 105 (AKSGLGKT) is an ATP binding site. The short motif at 207-210 (DECD) is the DECD box element. A Helicase C-terminal domain is found at 272–433 (GLQQYYIRLE…EFPEEGVDPS (162 aa)).

It belongs to the DEAD box helicase family. DECD subfamily.

Its subcellular location is the nucleus. It carries out the reaction ATP + H2O = ADP + phosphate + H(+). ATP-binding RNA helicase involved in transcription elongation and required for the export of mRNA out of the nucleus. SUB2 also plays a role in pre-mRNA splicing and spliceosome assembly. May be involved in rDNA and telomeric silencing, and maintenance of genome integrity. This is ATP-dependent RNA helicase SUB2 (SUB2) from Eremothecium gossypii (strain ATCC 10895 / CBS 109.51 / FGSC 9923 / NRRL Y-1056) (Yeast).